The chain runs to 413 residues: Tyrosine--tRNA ligase (413 aa).

Tyrosine 33 serves as a coordination point for L-tyrosine. The 'HIGH' region signature appears at 38–47 (PTADSLHVGH). L-tyrosine contacts are provided by tyrosine 162 and glutamine 166. Positions 225-229 (KFGKT) match the 'KMSKS' region motif. Residue lysine 228 coordinates ATP. In terms of domain architecture, S4 RNA-binding spans 346 to 413 (TSAIDAIVNV…KKKYYLLEIK (68 aa)).

Belongs to the class-I aminoacyl-tRNA synthetase family. TyrS type 1 subfamily. In terms of assembly, homodimer.

It is found in the cytoplasm. It catalyses the reaction tRNA(Tyr) + L-tyrosine + ATP = L-tyrosyl-tRNA(Tyr) + AMP + diphosphate + H(+). In terms of biological role, catalyzes the attachment of tyrosine to tRNA(Tyr) in a two-step reaction: tyrosine is first activated by ATP to form Tyr-AMP and then transferred to the acceptor end of tRNA(Tyr). The chain is Tyrosine--tRNA ligase from Mesoplasma florum (strain ATCC 33453 / NBRC 100688 / NCTC 11704 / L1) (Acholeplasma florum).